The following is a 252-amino-acid chain: MLEIGKVERYIHEKLKKEKLHFVLLDPDDVSPETAGKIAEMSEAIGVDAIMVGGSTGAEGEVLDSVVRAIKESSSLPVILFPGSHGGISRYADAIFFMSLLNSRNPFFITGSQALGAFTVKRYGIEPIPMAYLIIEPGETVGWVGDAKPIPRHKPKIAAAYALAGQYLGMRLVYLEAGSGAPQPVPPEMIALVRKVIDVPLIVGGGIRTKEQARRAVEAGADIIVTGTAVEKAGSIEKARKKLEELNSGVKI.

Mg(2+)-binding residues include Asp26 and Ser55. Residues 174–180, 205–206, and 227–228 contribute to the sn-glycerol 1-phosphate site; these read YLEAGSG, GG, and GT.

It belongs to the GGGP/HepGP synthase family. Group II subfamily. Mg(2+) is required as a cofactor.

The protein resides in the cytoplasm. It catalyses the reaction sn-glycerol 1-phosphate + (2E,6E,10E)-geranylgeranyl diphosphate = sn-3-O-(geranylgeranyl)glycerol 1-phosphate + diphosphate. The protein operates within membrane lipid metabolism; glycerophospholipid metabolism. Prenyltransferase that catalyzes the transfer of the geranylgeranyl moiety of geranylgeranyl diphosphate (GGPP) to the C3 hydroxyl of sn-glycerol-1-phosphate (G1P). This reaction is the first ether-bond-formation step in the biosynthesis of archaeal membrane lipids. This Thermococcus gammatolerans (strain DSM 15229 / JCM 11827 / EJ3) protein is Geranylgeranylglyceryl phosphate synthase.